We begin with the raw amino-acid sequence, 486 residues long: Maintenance of mitochondrial morphology protein 1 (486 aa).

The Lumenal portion of the chain corresponds to 1–19; sequence MSNDTSAQPAQSSLSFTQG. A helical membrane pass occupies residues 20-40; the sequence is LLVGQLSVVLLIGAFIKFFIF. Residues 41-486 lie on the Cytoplasmic side of the membrane; it reads GEASPSSSRS…GSLPDVVPVT (446 aa). 4 disordered regions span residues 45–98, 269–318, 393–412, and 420–486; these read PSSS…RSIL, QTST…AGTT, VRGQ…GVST, and ARDA…VPVT. A compositionally biased stretch (basic residues) spans 51-61; that stretch reads QTRRTSPHKRS. Residues 70-79 are compositionally biased toward basic and acidic residues; the sequence is LGSRSLKEKP. Polar residues-rich tracts occupy residues 80-96, 269-291, 307-318, and 401-412; these read SSNV…NTRS, QTST…NDYS, EQATQANNAGTT, and EVGSSGNAGVST. In terms of domain architecture, SMP-LTD spans 125-382; sequence QPESLDWFNV…EPRVQVVALP (258 aa). Basic and acidic residues-rich tracts occupy residues 429–440 and 462–473; these read HATRDADMEGLR and DSREQACRDDPF.

This sequence belongs to the MMM1 family. In terms of assembly, homodimer. Component of the ER-mitochondria encounter structure (ERMES) or MDM complex, composed of MMM1, MDM10, MDM12 and MDM34. An MMM1 homodimer associates with one molecule of MDM12 on each side in a pairwise head-to-tail manner, and the SMP-LTD domains of MMM1 and MDM12 generate a continuous hydrophobic tunnel for phospholipid trafficking.

Its subcellular location is the endoplasmic reticulum membrane. Its function is as follows. Component of the ERMES/MDM complex, which serves as a molecular tether to connect the endoplasmic reticulum (ER) and mitochondria. Components of this complex are involved in the control of mitochondrial shape and protein biogenesis, and function in nonvesicular lipid trafficking between the ER and mitochondria. The MDM12-MMM1 subcomplex functions in the major beta-barrel assembly pathway that is responsible for biogenesis of all outer membrane beta-barrel proteins, and acts in a late step after the SAM complex. The MDM10-MDM12-MMM1 subcomplex further acts in the TOM40-specific pathway after the action of the MDM12-MMM1 complex. Essential for establishing and maintaining the structure of mitochondria and maintenance of mtDNA nucleoids. In Coccidioides immitis (strain RS) (Valley fever fungus), this protein is Maintenance of mitochondrial morphology protein 1.